The primary structure comprises 426 residues: Serine--tRNA ligase (426 aa).

Residue 233-235 (TSE) participates in L-serine binding. ATP is bound at residue 264–266 (RSE). Glu-287 serves as a coordination point for L-serine. 351-354 (EISS) is a binding site for ATP. An L-serine-binding site is contributed by Ser-387.

It belongs to the class-II aminoacyl-tRNA synthetase family. Type-1 seryl-tRNA synthetase subfamily. Homodimer. The tRNA molecule binds across the dimer.

The protein resides in the cytoplasm. The catalysed reaction is tRNA(Ser) + L-serine + ATP = L-seryl-tRNA(Ser) + AMP + diphosphate + H(+). It carries out the reaction tRNA(Sec) + L-serine + ATP = L-seryl-tRNA(Sec) + AMP + diphosphate + H(+). The protein operates within aminoacyl-tRNA biosynthesis; selenocysteinyl-tRNA(Sec) biosynthesis; L-seryl-tRNA(Sec) from L-serine and tRNA(Sec): step 1/1. Functionally, catalyzes the attachment of serine to tRNA(Ser). Is also able to aminoacylate tRNA(Sec) with serine, to form the misacylated tRNA L-seryl-tRNA(Sec), which will be further converted into selenocysteinyl-tRNA(Sec). The polypeptide is Serine--tRNA ligase (Xylella fastidiosa (strain M12)).